The primary structure comprises 473 residues: MKTLYSLRRFYPVETLFNGTLALAGRDQETTGFAWWAGNARLINLSGKLLGAHVAHAGLIVFWAGAMNLFEVAHFVPEKPMYEQGLILLPHLATLGWGVGPGGEVIDTFPYFVSGVLHLISSAVLGFGGIYHALLGPETLEESFPFFGYVWKDRNKMTTILGIHLILLGLGAFLLVFKALYFGGVYDTWAPGGGDVRKITNLTLSPSIIFGYLLKSPFGGEGWIVSVDDLEDIIGGHVWLGSICILGGIWHILTKPFAWARRALVWSGEAYLSYSLAAISVFGFIACCFVWFNNTAYPSEFYGPTGPEASQAQAFTFLVRDQRLGANVGSAQGPTGLGKYLMRSPTGEVIFGGETMRFWDLRAPWLEPLRGPNGLDLSRLKKDIQPWQERRSAEYMTHAPLGSLNSVGGVATEINAVNYVSPRSWLATSHFVLGFFFFVGHLWHAGRARAAAAGFEKGIDRDFEPVLSMTPLN.

Positions 1-14 (MKTLYSLRRFYPVE) are excised as a propeptide. Residue threonine 15 is modified to N-acetylthreonine. Threonine 15 carries the post-translational modification Phosphothreonine. 5 helical membrane-spanning segments follow: residues 69–93 (LFEVAHFVPEKPMYEQGLILLPHLA), 134–155 (LLGPETLEESFPFFGYVWKDRN), 178–200 (KALYFGGVYDTWAPGGGDVRKIT), 255–275 (KPFAWARRALVWSGEAYLSYS), and 291–312 (WFNNTAYPSEFYGPTGPEASQA). Glutamate 367 contacts [CaMn4O5] cluster. The chain crosses the membrane as a helical span at residues 447 to 471 (RARAAAAGFEKGIDRDFEPVLSMTP).

The protein belongs to the PsbB/PsbC family. PsbC subfamily. In terms of assembly, PSII is composed of 1 copy each of membrane proteins PsbA, PsbB, PsbC, PsbD, PsbE, PsbF, PsbH, PsbI, PsbJ, PsbK, PsbL, PsbM, PsbT, PsbX, PsbY, PsbZ, Psb30/Ycf12, at least 3 peripheral proteins of the oxygen-evolving complex and a large number of cofactors. It forms dimeric complexes. It depends on Binds multiple chlorophylls and provides some of the ligands for the Ca-4Mn-5O cluster of the oxygen-evolving complex. It may also provide a ligand for a Cl- that is required for oxygen evolution. PSII binds additional chlorophylls, carotenoids and specific lipids. as a cofactor.

The protein resides in the plastid. It is found in the chloroplast thylakoid membrane. Functionally, one of the components of the core complex of photosystem II (PSII). It binds chlorophyll and helps catalyze the primary light-induced photochemical processes of PSII. PSII is a light-driven water:plastoquinone oxidoreductase, using light energy to abstract electrons from H(2)O, generating O(2) and a proton gradient subsequently used for ATP formation. The chain is Photosystem II CP43 reaction center protein from Helianthus annuus (Common sunflower).